Consider the following 1265-residue polypeptide: MITSELSVLQDSTNESAVMHTDMTAVSADLSTELVEDLEVKGKRKRGRPGRPPSAIKKPRKTPGDRSRAEPGSRGRGRANGHPQQNGEGDPVTLFEVVKMGKSAMQAVVDDWIESYKQDRDIALLDLINFFIQCSGCKGTVRIEMFRNMQNAEIIRKMTEEFDEDSGDYPLTMPGPHWKKFRCNFCEFISVLIRQCQYSIIYDEYMMDTVISLLTGLSDSQVRAFRHTSTLAAMKLMTALVNVALNLSIHQDNTQRQYETERNKIINKRANERLELLLQKRKELQENQDEIENMMNSIFKGIFVHRYRDAIAEIRAICIEEIGVWMKMYSDAFLNDSYLKYVGWTLHDRQGEVRLKCLKALQSLYTNRELFPKLELFTNRFKDRIVSMTLDKEYDVAVEAIRLVTLILHGSEEALSNEDCENVYHLVYSAHRPVAVAAGEFLHKKLFSRHDPQAEEALAKRRGRSSPNGNLVKMLVLFFLESELHEHAAYLVDSLWESSQELLKDWECMTELLVEEPMQGEEVMSERQESALVELMVCTIRQAAEAHPPVGRGTGKRVLTAKERKTQLDDKTKLTEHFIVALPVLLSKYSADAEKVANLLQIPQYFDLELYSTGRMEKHLDSLLKQIRFVVEKHIESDVLEACSKTYSILCSEEYTIQNRVEIAHSQLIDELADRFSHAVEELLQEAEEADEDEIYNVMASLKRLTCFHNAHDLTKWDFFGNCYRLLRAGIEHEGMMEQIVVQALQCSHYSILWQLVKITEGNPSKEEMLALRKTVKSFLAVCQQCLSSMTTLVKEQAFMLLCDLLMIFSHQLTTGGRENLLLLVFNPDVGLQSELLSFVMDHVFIDQDDENQSMEGDEEDEANKIEALHKRRNLLASFCKLIIYDIVDMNAAADIFKHYMKYYNDYGDIIKETLSKTRQMDKIQCAKTLILSLQQLFNELVQEQGPNLDRTSAHVSGIKELARRFALTFGLDQIKTREAVATLHKDGIEFAFKYQNPKGPEYPPLNLAFLEVLSEFSSKLLRQDKKTVHSYLEKFLTDLMMERREDVWLPLISYRNSLVTGGDEDRLSVNSGGSNSKGSSVRSKKGRPPLHKKRVIEEESIDNSWVTRNDTIQTPGALTTPQLTSTVLRENPRQIPEQIPEQESEPSSEPDFLHSPQMQMSWLGQQKLEDLNRKDRTSMSYMKVRSGVRHAVRGLMEDDAEPIFEDVMMSSRGQLEDMNEEFEDTMVIDLPPSRNRRERAELRPDFFDSAAIIEDDSGFGMPMF.

Residues 1-16 (MITSELSVLQDSTNES) show a composition bias toward polar residues. 2 disordered regions span residues 1 to 21 (MITSELSVLQDSTNESAVMHT) and 37 to 91 (DLEV…EGDP). Positions 62–73 (TPGDRSRAEPGS) are enriched in basic and acidic residues. Residues 303–388 (FVHRYRDAIA…NRFKDRIVSM (86 aa)) enclose the SCD domain. 2 disordered regions span residues 1063–1097 (GDEDRLSVNSGGSNSKGSSVRSKKGRPPLHKKRVI) and 1111–1130 (DTIQTPGALTTPQLTSTVLR). The span at 1069–1082 (SVNSGGSNSKGSSV) shows a compositional bias: low complexity. A compositionally biased stretch (basic residues) spans 1083-1095 (RSKKGRPPLHKKR). The segment covering 1111–1129 (DTIQTPGALTTPQLTSTVL) has biased composition (polar residues).

This sequence belongs to the SCC3 family. As to quaternary structure, interacts directly with RAD21 in cohesin complex. Cohesin complexes are composed of a heterodimer between and SMC3, which are attached via their hinge domain, and RAD21 which link them at their heads, and one STAG protein (STAG1 OR STAG2). In cohesin complexes, STAG1 is mutually exclusive with STAG2. In terms of processing, phosphorylated by PLK1. The large dissociation of cohesin from chromosome arms during prophase is partly due to its phosphorylation.

It is found in the nucleus. It localises to the chromosome. The protein localises to the centromere. Its function is as follows. Component of cohesin complex, a complex required for the cohesion of sister chromatids after DNA replication. The cohesin complex apparently forms a large proteinaceous ring within which sister chromatids can be trapped. At anaphase, the complex is cleaved and dissociates from chromatin, allowing sister chromatids to segregate. The cohesin complex may also play a role in spindle pole assembly during mitosis. The sequence is that of Cohesin subunit SA-1 (stag1) from Xenopus laevis (African clawed frog).